A 631-amino-acid chain; its full sequence is Golgin subfamily A member 8R (631 aa).

The tract at residues 1–72 is disordered; it reads MAEETQHNKL…REGPTSSATL (72 aa). Positions 38–50 are enriched in polar residues; sequence TNGSIPETATSGG. Coiled-coil stretches lie at residues 85–149, 209–247, and 303–419; these read VLDS…NTDL, ELEQ…HIEG, and SEVE…LSLM. Disordered regions lie at residues 422–451, 502–523, and 551–610; these read PGEG…DPES, AKDA…DEGE, and NSAD…QEHP. Gly residues predominate over residues 507 to 519; sequence LGGGHHQAGAQGG. Over residues 568–577 the composition is skewed to basic and acidic residues; sequence AADKHGDLRE.

It belongs to the GOLGA8 family.

This is Golgin subfamily A member 8R from Homo sapiens (Human).